The sequence spans 585 residues: Polyadenylate-binding protein, cytoplasmic and nuclear (585 aa).

The segment at 14-37 (QLKIEEQTAPTTTESETPKVETSG) is disordered. 4 RRM domains span residues 38-116 (ASLY…WSQR), 126-203 (GNIY…LHVS), 219-296 (TNVY…RAQK), and 322-399 (VNLF…IAQR). Residues 488–567 (GQFPRNGQQQ…AHAAYQKFKE (80 aa)) form the PABC domain.

Belongs to the polyadenylate-binding protein type-1 family.

The protein resides in the cytoplasm. It localises to the nucleus. Its function is as follows. Binds the poly(A) tail of mRNA. Appears to be an important mediator of the multiple roles of the poly(A) tail in mRNA biogenesis, stability and translation. In the nucleus, involved in both mRNA cleavage and polyadenylation. Is also required for efficient mRNA export to the cytoplasm. Acts in concert with a poly(A)-specific nuclease (PAN) to affect poly(A) tail shortening, which may occur concomitantly with either nucleocytoplasmic mRNA transport or translational initiation. In the cytoplasm, stimulates translation initiation and regulates mRNA decay through translation termination-coupled poly(A) shortening, probably mediated by PAN. The sequence is that of Polyadenylate-binding protein, cytoplasmic and nuclear (PAB1) from Eremothecium gossypii (strain ATCC 10895 / CBS 109.51 / FGSC 9923 / NRRL Y-1056) (Yeast).